A 706-amino-acid polypeptide reads, in one-letter code: Fatty acid oxidation complex subunit alpha (706 aa).

Positions 1–188 (MEKTFSLSRR…KMGLVDDVVP (188 aa)) are enoyl-CoA hydratase. Residues 308-706 (RKVAKAVVLG…AMAAEGKTFY (399 aa)) form a 3-hydroxyacyl-CoA dehydrogenase region.

It in the N-terminal section; belongs to the enoyl-CoA hydratase/isomerase family. In the central section; belongs to the 3-hydroxyacyl-CoA dehydrogenase family. Heterotetramer of two alpha chains (FadJ) and two beta chains (FadI).

It localises to the cytoplasm. The catalysed reaction is a (3S)-3-hydroxyacyl-CoA = a (2E)-enoyl-CoA + H2O. It catalyses the reaction a 4-saturated-(3S)-3-hydroxyacyl-CoA = a (3E)-enoyl-CoA + H2O. The enzyme catalyses a (3S)-3-hydroxyacyl-CoA + NAD(+) = a 3-oxoacyl-CoA + NADH + H(+). It carries out the reaction (3S)-3-hydroxybutanoyl-CoA = (3R)-3-hydroxybutanoyl-CoA. It participates in lipid metabolism; fatty acid beta-oxidation. Functionally, catalyzes the formation of a hydroxyacyl-CoA by addition of water on enoyl-CoA. Also exhibits 3-hydroxyacyl-CoA epimerase and 3-hydroxyacyl-CoA dehydrogenase activities. This Shewanella amazonensis (strain ATCC BAA-1098 / SB2B) protein is Fatty acid oxidation complex subunit alpha.